The following is a 422-amino-acid chain: Enolase 2 (422 aa).

Q162 contributes to the (2R)-2-phosphoglycerate binding site. Residue E204 is the Proton donor of the active site. Mg(2+) contacts are provided by D241, E285, and D312. Residues K337, R366, S367, and K388 each contribute to the (2R)-2-phosphoglycerate site. Catalysis depends on K337, which acts as the Proton acceptor.

Belongs to the enolase family. Requires Mg(2+) as cofactor.

It is found in the cytoplasm. It localises to the secreted. The protein localises to the cell surface. The enzyme catalyses (2R)-2-phosphoglycerate = phosphoenolpyruvate + H2O. The protein operates within carbohydrate degradation; glycolysis; pyruvate from D-glyceraldehyde 3-phosphate: step 4/5. Functionally, catalyzes the reversible conversion of 2-phosphoglycerate (2-PG) into phosphoenolpyruvate (PEP). It is essential for the degradation of carbohydrates via glycolysis. This is Enolase 2 from Lactococcus lactis subsp. lactis (strain IL1403) (Streptococcus lactis).